Consider the following 35-residue polypeptide: Photosystem II reaction center protein M (35 aa).

A helical membrane pass occupies residues Ile-5–Leu-25.

Belongs to the PsbM family. As to quaternary structure, PSII is composed of 1 copy each of membrane proteins PsbA, PsbB, PsbC, PsbD, PsbE, PsbF, PsbH, PsbI, PsbJ, PsbK, PsbL, PsbM, PsbT, PsbX, PsbY, PsbZ, Psb30/Ycf12, at least 3 peripheral proteins of the oxygen-evolving complex and a large number of cofactors. It forms dimeric complexes.

The protein resides in the plastid. Its subcellular location is the chloroplast thylakoid membrane. Functionally, one of the components of the core complex of photosystem II (PSII). PSII is a light-driven water:plastoquinone oxidoreductase that uses light energy to abstract electrons from H(2)O, generating O(2) and a proton gradient subsequently used for ATP formation. It consists of a core antenna complex that captures photons, and an electron transfer chain that converts photonic excitation into a charge separation. This subunit is found at the monomer-monomer interface. The chain is Photosystem II reaction center protein M from Staurastrum punctulatum (Green alga).